A 209-amino-acid polypeptide reads, in one-letter code: Vacuolar protein sorting-associated protein 28 homolog 1 (209 aa).

Positions 1–99 (MEVKLWNDKR…TSGVPATVEH (99 aa)) constitute a VPS28 N-terminal domain. Residues 109 to 205 (SSASVVAECV…SYNSFMAALP (97 aa)) form the VPS28 C-terminal domain.

This sequence belongs to the VPS28 family. Component of the endosomal sorting required for transport complex I (ESCRT-I), composed of ELC, VPS28 and VPS37. Interacts with ELC.

The protein resides in the endosome. Component of the ESCRT-I complex (endosomal sorting complex required for transport I), a regulator of vesicular trafficking process. Required for the sorting of endocytic ubiquitinated cargos into multivesicular bodies (MVBs). Mediates the association to the ESCRT-0 complex. The chain is Vacuolar protein sorting-associated protein 28 homolog 1 (VPS28-1) from Arabidopsis thaliana (Mouse-ear cress).